A 61-amino-acid chain; its full sequence is Photosystem II reaction center protein K (61 aa).

Residues 1–24 constitute a propeptide that is removed on maturation; that stretch reads MLNIFCLICICLNSTLYSSSFFFA. A helical membrane pass occupies residues 32–52; it reads FFNPIIDVMPIIPVLFFLLAF.

Belongs to the PsbK family. As to quaternary structure, PSII is composed of 1 copy each of membrane proteins PsbA, PsbB, PsbC, PsbD, PsbE, PsbF, PsbH, PsbI, PsbJ, PsbK, PsbL, PsbM, PsbT, PsbX, PsbY, PsbZ, Psb30/Ycf12, at least 3 peripheral proteins of the oxygen-evolving complex and a large number of cofactors. It forms dimeric complexes.

It localises to the plastid. The protein resides in the chloroplast thylakoid membrane. Functionally, one of the components of the core complex of photosystem II (PSII). PSII is a light-driven water:plastoquinone oxidoreductase that uses light energy to abstract electrons from H(2)O, generating O(2) and a proton gradient subsequently used for ATP formation. It consists of a core antenna complex that captures photons, and an electron transfer chain that converts photonic excitation into a charge separation. The chain is Photosystem II reaction center protein K from Phalaenopsis aphrodite subsp. formosana (Moth orchid).